The primary structure comprises 288 residues: 4-diphosphocytidyl-2-C-methyl-D-erythritol kinase (288 aa).

Residue Lys8 is part of the active site. 92–102 is an ATP binding site; that stretch reads PVAAGMAGGST. Residue Asp134 is part of the active site.

The protein belongs to the GHMP kinase family. IspE subfamily.

The catalysed reaction is 4-CDP-2-C-methyl-D-erythritol + ATP = 4-CDP-2-C-methyl-D-erythritol 2-phosphate + ADP + H(+). The protein operates within isoprenoid biosynthesis; isopentenyl diphosphate biosynthesis via DXP pathway; isopentenyl diphosphate from 1-deoxy-D-xylulose 5-phosphate: step 3/6. Its function is as follows. Catalyzes the phosphorylation of the position 2 hydroxy group of 4-diphosphocytidyl-2C-methyl-D-erythritol. The chain is 4-diphosphocytidyl-2-C-methyl-D-erythritol kinase from Clostridium perfringens (strain SM101 / Type A).